A 204-amino-acid chain; its full sequence is Uracil-DNA glycosylase (204 aa).

D47 functions as the Proton acceptor in the catalytic mechanism.

This sequence belongs to the uracil-DNA glycosylase (UDG) superfamily. UNG family.

The protein localises to the host nucleus. The enzyme catalyses Hydrolyzes single-stranded DNA or mismatched double-stranded DNA and polynucleotides, releasing free uracil.. In terms of biological role, excises uracil residues from the DNA which can arise as a result of misincorporation of dUMP residues by DNA polymerase or deamination of cytosines. Therefore may reduce deleterious uracil incorporation into the viral genome, particularly in terminally differentiated cells which lack DNA repair enzymes. This Bos taurus (Bovine) protein is Uracil-DNA glycosylase (UL2).